Consider the following 1401-residue polypeptide: DNA-directed RNA polymerase subunit beta' (1401 aa).

Positions 70, 72, 85, and 88 each coordinate Zn(2+). Mg(2+) is bound by residues aspartate 460, aspartate 462, and aspartate 464. Positions 814, 888, 895, and 898 each coordinate Zn(2+). The segment at 1369–1388 is disordered; sequence RQKQKAVEQEGPSAEQATDN.

This sequence belongs to the RNA polymerase beta' chain family. As to quaternary structure, the RNAP catalytic core consists of 2 alpha, 1 beta, 1 beta' and 1 omega subunit. When a sigma factor is associated with the core the holoenzyme is formed, which can initiate transcription. Mg(2+) serves as cofactor. It depends on Zn(2+) as a cofactor.

The enzyme catalyses RNA(n) + a ribonucleoside 5'-triphosphate = RNA(n+1) + diphosphate. Functionally, DNA-dependent RNA polymerase catalyzes the transcription of DNA into RNA using the four ribonucleoside triphosphates as substrates. This chain is DNA-directed RNA polymerase subunit beta', found in Aliivibrio fischeri (strain ATCC 700601 / ES114) (Vibrio fischeri).